The primary structure comprises 218 residues: Small ribosomal subunit protein uS3 (218 aa).

One can recognise a KH type-2 domain in the interval 38–106 (IRDYVAKRLS…RVHINIVEIK (69 aa)).

The protein belongs to the universal ribosomal protein uS3 family. Part of the 30S ribosomal subunit. Forms a tight complex with proteins S10 and S14.

Binds the lower part of the 30S subunit head. Binds mRNA in the 70S ribosome, positioning it for translation. The protein is Small ribosomal subunit protein uS3 of Listeria monocytogenes serotype 4b (strain F2365).